Consider the following 242-residue polypeptide: MAPK-interacting and spindle-stabilizing protein-like (242 aa).

Disordered regions lie at residues 1 to 145 and 192 to 242; these read MSDE…SLGP and PPGA…HSYH. Ser2 is subject to N-acetylserine. Residues Ser2, Ser6, and Ser15 each carry the phosphoserine modification. The segment covering 13 to 29 has biased composition (polar residues); that stretch reads EQSSAKPPAVTNTKAGH. Low complexity predominate over residues 30–43; sequence SSQGWPGSSPWSNP. Composition is skewed to pro residues over residues 44-53 and 75-114; these read SAPPAMPSGL and SMPP…PGPT. Low complexity predominate over residues 192 to 210; that stretch reads PPGAWGPAAPYPGPAGSYP.

The protein belongs to the MISS family.

The chain is MAPK-interacting and spindle-stabilizing protein-like (Mapk1ip1l) from Mus musculus (Mouse).